The chain runs to 660 residues: Bifunctional polymyxin resistance protein ArnA (660 aa).

The formyltransferase ArnAFT stretch occupies residues 1-304; sequence MKAVVFAYHD…TLGLVAGAII (304 aa). Histidine 104 (proton donor; for formyltransferase activity) is an active-site residue. Residues arginine 114 and 136 to 140 contribute to the (6R)-10-formyltetrahydrofolate site; that span reads VSRAD. Positions 314-660 are dehydrogenase ArnADH; sequence RRTRVLILGV…KTVELTEPQA (347 aa). NAD(+) contacts are provided by residues aspartate 347 and 368-369; that span reads DI. Residues alanine 393, tyrosine 398, and 432–433 each bind UDP-alpha-D-glucuronate; that span reads TS. Residue glutamate 434 is the Proton acceptor; for decarboxylase activity of the active site. UDP-alpha-D-glucuronate-binding positions include arginine 460, asparagine 492, 526–535, and tyrosine 613; that span reads KLIDGGRQKR. Arginine 619 serves as the catalytic Proton donor; for decarboxylase activity.

This sequence in the N-terminal section; belongs to the Fmt family. UDP-L-Ara4N formyltransferase subfamily. It in the C-terminal section; belongs to the NAD(P)-dependent epimerase/dehydratase family. UDP-glucuronic acid decarboxylase subfamily. As to quaternary structure, homohexamer, formed by a dimer of trimers.

It catalyses the reaction UDP-alpha-D-glucuronate + NAD(+) = UDP-beta-L-threo-pentopyranos-4-ulose + CO2 + NADH. The catalysed reaction is UDP-4-amino-4-deoxy-beta-L-arabinose + (6R)-10-formyltetrahydrofolate = UDP-4-deoxy-4-formamido-beta-L-arabinose + (6S)-5,6,7,8-tetrahydrofolate + H(+). It participates in nucleotide-sugar biosynthesis; UDP-4-deoxy-4-formamido-beta-L-arabinose biosynthesis; UDP-4-deoxy-4-formamido-beta-L-arabinose from UDP-alpha-D-glucuronate: step 1/3. It functions in the pathway nucleotide-sugar biosynthesis; UDP-4-deoxy-4-formamido-beta-L-arabinose biosynthesis; UDP-4-deoxy-4-formamido-beta-L-arabinose from UDP-alpha-D-glucuronate: step 3/3. The protein operates within bacterial outer membrane biogenesis; lipopolysaccharide biosynthesis. Bifunctional enzyme that catalyzes the oxidative decarboxylation of UDP-glucuronic acid (UDP-GlcUA) to UDP-4-keto-arabinose (UDP-Ara4O) and the addition of a formyl group to UDP-4-amino-4-deoxy-L-arabinose (UDP-L-Ara4N) to form UDP-L-4-formamido-arabinose (UDP-L-Ara4FN). The modified arabinose is attached to lipid A and is required for resistance to polymyxin and cationic antimicrobial peptides. The sequence is that of Bifunctional polymyxin resistance protein ArnA from Enterobacter sp. (strain 638).